A 251-amino-acid polypeptide reads, in one-letter code: Type III pantothenate kinase (251 aa).

Residue 6 to 13 (DCGNSFIK) participates in ATP binding. Substrate contacts are provided by residues Y93 and 100 to 103 (GLDR). Residue D102 is the Proton acceptor of the active site. D122 is a K(+) binding site. T125 contacts ATP. T182 lines the substrate pocket.

Belongs to the type III pantothenate kinase family. In terms of assembly, homodimer. Requires NH4(+) as cofactor. The cofactor is K(+).

It localises to the cytoplasm. The catalysed reaction is (R)-pantothenate + ATP = (R)-4'-phosphopantothenate + ADP + H(+). The protein operates within cofactor biosynthesis; coenzyme A biosynthesis; CoA from (R)-pantothenate: step 1/5. In terms of biological role, catalyzes the phosphorylation of pantothenate (Pan), the first step in CoA biosynthesis. In Azotobacter vinelandii (strain DJ / ATCC BAA-1303), this protein is Type III pantothenate kinase.